The sequence spans 309 residues: 15-cis-phytoene synthase (309 aa).

Positions 290–309 are disordered; that stretch reads LTSRMRAHPPRPAHLWQRPL.

It belongs to the phytoene/squalene synthase family. ATP serves as cofactor. The cofactor is Mn(2+). Requires Mg(2+) as cofactor.

The catalysed reaction is 2 (2E,6E,10E)-geranylgeranyl diphosphate = 15-cis-phytoene + 2 diphosphate. The protein operates within carotenoid biosynthesis; phytoene biosynthesis. Its activity is regulated as follows. Inhibited by phosphate ions and squalestatin. Its function is as follows. Involved in the biosynthesis of carotenoids. Catalyzes the condensation of two molecules of geranylgeranyl diphosphate (GGPP) to give prephytoene diphosphate (PPPP) and the subsequent rearrangement of the cyclopropylcarbinyl intermediate to yield the 15-cis-phytoene isomer. In Pantoea ananas (Erwinia uredovora), this protein is 15-cis-phytoene synthase (crtB).